The primary structure comprises 313 residues: tRNA dimethylallyltransferase (313 aa).

11 to 18 (GPTACGKT) is a binding site for ATP. 13-18 (TACGKT) lines the substrate pocket. Interaction with substrate tRNA regions lie at residues 36–39 (DSAL), 160–164 (QRIGR), and 243–248 (RCVGYR).

The protein belongs to the IPP transferase family. In terms of assembly, monomer. It depends on Mg(2+) as a cofactor.

The catalysed reaction is adenosine(37) in tRNA + dimethylallyl diphosphate = N(6)-dimethylallyladenosine(37) in tRNA + diphosphate. Functionally, catalyzes the transfer of a dimethylallyl group onto the adenine at position 37 in tRNAs that read codons beginning with uridine, leading to the formation of N6-(dimethylallyl)adenosine (i(6)A). This is tRNA dimethylallyltransferase from Neisseria gonorrhoeae (strain NCCP11945).